A 365-amino-acid polypeptide reads, in one-letter code: DNA polymerase IV 1 (365 aa).

Residues 6–196 (VLHIDMDYFF…LNVSKLWGIG (191 aa)) enclose the UmuC domain. 2 residues coordinate Mg(2+): D10 and D113. E114 is a catalytic residue.

The protein belongs to the DNA polymerase type-Y family. In terms of assembly, monomer. The cofactor is Mg(2+).

Its subcellular location is the cytoplasm. It carries out the reaction DNA(n) + a 2'-deoxyribonucleoside 5'-triphosphate = DNA(n+1) + diphosphate. Poorly processive, error-prone DNA polymerase involved in untargeted mutagenesis. Copies undamaged DNA at stalled replication forks, which arise in vivo from mismatched or misaligned primer ends. These misaligned primers can be extended by PolIV. Exhibits no 3'-5' exonuclease (proofreading) activity. May be involved in translesional synthesis. This is DNA polymerase IV 1 (dbh1) from Methanosarcina mazei (strain ATCC BAA-159 / DSM 3647 / Goe1 / Go1 / JCM 11833 / OCM 88) (Methanosarcina frisia).